A 154-amino-acid chain; its full sequence is Transcriptional repressor NrdR (154 aa).

A zinc finger lies at 3-34; sequence CPFCRHPDSRVVDSRETDEGQAIRRRRSCPEC. The 91-residue stretch at 46–136 folds into the ATP-cone domain; the sequence is LAVVKRSGVT…VYRSFSSAED (91 aa).

The protein belongs to the NrdR family. Zn(2+) is required as a cofactor.

Negatively regulates transcription of bacterial ribonucleotide reductase nrd genes and operons by binding to NrdR-boxes. The sequence is that of Transcriptional repressor NrdR from Mycolicibacterium gilvum (strain PYR-GCK) (Mycobacterium gilvum (strain PYR-GCK)).